A 347-amino-acid chain; its full sequence is MKNTYRASNISGFNWWGTVIGFILSTSNRFYIGWFGIFMFPLTGLAIIAYVAAFILAPPVDIDGIREPVAGSLLYGNNIISGAVIPSSNAIGVHFYPEWESATLLEWLYNGGTYQFVVLHFIGGVSSWMGREWEFSFRLGMRPWIYLAFSAPLVAATAVFVFYPIGQGSFSDGMPLGVSGTFNFMLVFQAEHNILMHPFHILGVAGVFGGSLFSAMHGSLVTSSLLAETSGDVSLNVGYNFGQEDETYSISAAHGYFGRLIFQYASFNNSRSLHFFLAAWPVIGIWFTALGVSTMAFNLNGLNFNQSIIDSNGHLINSWADLVNRANLGIEVMHERNTHHYPLDLGL.

3 helical membrane-spanning segments follow: residues 31–48 (YIGWFGIFMFPLTGLAII), 120–135 (HFIGGVSSWMGREWEF), and 144–158 (WIYLAFSAPLVAATA). Chlorophyll a is bound at residue His120. Position 128 (Trp128) interacts with pheophytin a. Asp172 and Glu191 together coordinate [CaMn4O5] cluster. A helical membrane pass occupies residues 199–220 (FHILGVAGVFGGSLFSAMHGSL). Chlorophyll a is bound at residue His200. Residues His217 and 266 to 267 (SF) contribute to the a quinone site. His217 contributes to the Fe cation binding site. His274 contacts Fe cation. A helical membrane pass occupies residues 276 to 290 (FLAAWPVIGIWFTAL). Residues His334, Glu335, and Asp344 each coordinate [CaMn4O5] cluster.

It belongs to the reaction center PufL/M/PsbA/D family. As to quaternary structure, PSII is composed of 1 copy each of membrane proteins PsbA, PsbB, PsbC, PsbD, PsbE, PsbF, PsbH, PsbI, PsbJ, PsbK, PsbL, PsbM, PsbT, PsbX, PsbY, PsbZ, Psb30/Ycf12, at least 3 peripheral proteins of the oxygen-evolving complex and a large number of cofactors. It forms dimeric complexes. Requires The D1/D2 heterodimer binds P680, chlorophylls that are the primary electron donor of PSII, and subsequent electron acceptors. It shares a non-heme iron and each subunit binds pheophytin, quinone, additional chlorophylls, carotenoids and lipids. D1 provides most of the ligands for the Mn4-Ca-O5 cluster of the oxygen-evolving complex (OEC). There is also a Cl(-1) ion associated with D1 and D2, which is required for oxygen evolution. The PSII complex binds additional chlorophylls, carotenoids and specific lipids. as cofactor. Post-translationally, tyr-163 forms a radical intermediate that is referred to as redox-active TyrZ, YZ or Y-Z.

Its subcellular location is the plastid. It is found in the chloroplast thylakoid membrane. The enzyme catalyses 2 a plastoquinone + 4 hnu + 2 H2O = 2 a plastoquinol + O2. In terms of biological role, photosystem II (PSII) is a light-driven water:plastoquinone oxidoreductase that uses light energy to abstract electrons from H(2)O, generating O(2) and a proton gradient subsequently used for ATP formation. It consists of a core antenna complex that captures photons, and an electron transfer chain that converts photonic excitation into a charge separation. The D1/D2 (PsbA/PsbD) reaction center heterodimer binds P680, the primary electron donor of PSII as well as several subsequent electron acceptors. The polypeptide is Photosystem II protein D1 (Alexandrium tamarense (Red tide dinoflagellate)).